Reading from the N-terminus, the 161-residue chain is MAIAVYPGTFDPMTRGHEDLVRRASNIFDELVVGVAHSPNKRPFFSLEERISIAREVLGHYPNVRVEGFAGLLKDFVRKNNARVIVRGLRAVSDFEYEFQMAGMNRYLLPDVETMFLTPSDQYQFISGTFVREIAVLGGDVSKFVFPSVERWLAEKISKPE.

T9 contributes to the substrate binding site. ATP is bound by residues 9–10 (TF) and H17. Positions 41, 73, and 87 each coordinate substrate. Residues 88-90 (GLR), E98, and 123-129 (YQFISGT) each bind ATP.

The protein belongs to the bacterial CoaD family. Homohexamer. Requires Mg(2+) as cofactor.

Its subcellular location is the cytoplasm. It catalyses the reaction (R)-4'-phosphopantetheine + ATP + H(+) = 3'-dephospho-CoA + diphosphate. Its pathway is cofactor biosynthesis; coenzyme A biosynthesis; CoA from (R)-pantothenate: step 4/5. Reversibly transfers an adenylyl group from ATP to 4'-phosphopantetheine, yielding dephospho-CoA (dPCoA) and pyrophosphate. The chain is Phosphopantetheine adenylyltransferase from Cupriavidus pinatubonensis (strain JMP 134 / LMG 1197) (Cupriavidus necator (strain JMP 134)).